Here is a 130-residue protein sequence, read N- to C-terminus: Transcription antitermination protein NusB (130 aa).

The protein belongs to the NusB family.

Involved in transcription antitermination. Required for transcription of ribosomal RNA (rRNA) genes. Binds specifically to the boxA antiterminator sequence of the ribosomal RNA (rrn) operons. This chain is Transcription antitermination protein NusB, found in Geobacillus kaustophilus (strain HTA426).